The following is a 147-amino-acid chain: Large ribosomal subunit protein uL13 (147 aa).

The protein belongs to the universal ribosomal protein uL13 family. Part of the 50S ribosomal subunit.

In terms of biological role, this protein is one of the early assembly proteins of the 50S ribosomal subunit, although it is not seen to bind rRNA by itself. It is important during the early stages of 50S assembly. The chain is Large ribosomal subunit protein uL13 from Rhodococcus jostii (strain RHA1).